We begin with the raw amino-acid sequence, 218 residues long: uncharacterized protein (218 aa).

The next 2 helical transmembrane spans lie at 8–28 and 158–178; these read LAVFLIILVGILLLGGIATAG and ILFYTGISIIGAFFVSGFLLI.

It localises to the cell membrane. This is an uncharacterized protein from Mycoplasma genitalium (strain ATCC 33530 / DSM 19775 / NCTC 10195 / G37) (Mycoplasmoides genitalium).